The sequence spans 134 residues: Acyl carrier protein, chloroplastic (134 aa).

Residues 1–51 constitute a chloroplast transit peptide; the sequence is MSTTFCSSVSMQATSLAATTRISFQKPALVSRTNLSFNLSRSIPTRLSVSC. Residues 55–130 enclose the Carrier domain; the sequence is PETVEKVSKI…EAAELIDELV (76 aa). Position 90 is an O-(pantetheine 4'-phosphoryl)serine (Ser90).

It belongs to the acyl carrier protein (ACP) family. Post-translationally, 4'-phosphopantetheine is transferred from CoA to a specific serine of apo-ACP by acpS. This modification is essential for activity because fatty acids are bound in thioester linkage to the sulfhydryl of the prosthetic group. As to expression, seed.

Its subcellular location is the plastid. The protein resides in the chloroplast. Its pathway is lipid metabolism; fatty acid biosynthesis. Its function is as follows. Carrier of the growing fatty acid chain in fatty acid biosynthesis. This Brassica napus (Rape) protein is Acyl carrier protein, chloroplastic (ACL1.A1).